Reading from the N-terminus, the 295-residue chain is Trimeric intracellular cation channel type A (295 aa).

Residues M1–K18 are Lumenal-facing. A helical transmembrane segment spans residues L19–Y39. The Cytoplasmic segment spans residues E40–P51. The chain crosses the membrane as a helical span at residues V52–L72. Residues L73–N84 are Lumenal-facing. G74 serves as a coordination point for Ca(2+). The chain crosses the membrane as a helical span at residues A85 to F105. At Y106 to G144 the chain is on the cytoplasmic side. A 1,2-diacyl-sn-glycero-3-phospho-(1D-myo-inositol-4,5-bisphosphate) is bound by residues K122 and R126. A helical membrane pass occupies residues W145 to L165. Topologically, residues E166–N178 are lumenal. A helical membrane pass occupies residues E179 to L199. Over Q200–Q201 the chain is Cytoplasmic. A helical membrane pass occupies residues A202 to V222. Over C223 to H233 the chain is Lumenal. Residues G234–G254 traverse the membrane as a helical segment. Residues D255–E295 lie on the Cytoplasmic side of the membrane. A disordered region spans residues D258–E295. A compositionally biased stretch (basic and acidic residues) spans D267 to T286.

It belongs to the TMEM38 family. In terms of assembly, homotrimer; conformation seems to be controled by binding to diacylglycerol (DAG).

It is found in the sarcoplasmic reticulum membrane. Its subcellular location is the nucleus membrane. The catalysed reaction is K(+)(in) = K(+)(out). With respect to regulation, channel activity is activated by a change of voltage within the sarcoplasmic reticulum lumen and blocked by luminal high Ca(2+) levels. Its function is as follows. Intracellular monovalent cation channel required for maintenance of rapid intracellular calcium release. Acts as a potassium counter-ion channel that functions in synchronization with calcium release from intracellular stores. Opened by a change of voltage within the sarcoplasmic reticulum lumen. This Xenopus laevis (African clawed frog) protein is Trimeric intracellular cation channel type A (tmem38a).